We begin with the raw amino-acid sequence, 449 residues long: CCA-adding enzyme (449 aa).

Residues serine 57 and arginine 60 each contribute to the ATP site. 2 residues coordinate CTP: serine 57 and arginine 60. Aspartate 69, aspartate 71, and aspartate 124 together coordinate Mg(2+). Residues histidine 147, lysine 167, and tyrosine 176 each coordinate ATP. Residues histidine 147, lysine 167, and tyrosine 176 each contribute to the CTP site.

The protein belongs to the tRNA nucleotidyltransferase/poly(A) polymerase family. Archaeal CCA-adding enzyme subfamily. Homodimer. The cofactor is Mg(2+).

It carries out the reaction a tRNA precursor + 2 CTP + ATP = a tRNA with a 3' CCA end + 3 diphosphate. The enzyme catalyses a tRNA with a 3' CCA end + 2 CTP + ATP = a tRNA with a 3' CCACCA end + 3 diphosphate. Catalyzes the addition and repair of the essential 3'-terminal CCA sequence in tRNAs without using a nucleic acid template. Adds these three nucleotides in the order of C, C, and A to the tRNA nucleotide-73, using CTP and ATP as substrates and producing inorganic pyrophosphate. tRNA 3'-terminal CCA addition is required both for tRNA processing and repair. Also involved in tRNA surveillance by mediating tandem CCA addition to generate a CCACCA at the 3' terminus of unstable tRNAs. While stable tRNAs receive only 3'-terminal CCA, unstable tRNAs are marked with CCACCA and rapidly degraded. The sequence is that of CCA-adding enzyme from Methanocaldococcus jannaschii (strain ATCC 43067 / DSM 2661 / JAL-1 / JCM 10045 / NBRC 100440) (Methanococcus jannaschii).